A 574-amino-acid polypeptide reads, in one-letter code: 2-succinyl-5-enolpyruvyl-6-hydroxy-3-cyclohexene-1-carboxylate synthase (574 aa).

Belongs to the TPP enzyme family. MenD subfamily. In terms of assembly, homodimer. It depends on Mg(2+) as a cofactor. Mn(2+) serves as cofactor. The cofactor is thiamine diphosphate.

It catalyses the reaction isochorismate + 2-oxoglutarate + H(+) = 5-enolpyruvoyl-6-hydroxy-2-succinyl-cyclohex-3-ene-1-carboxylate + CO2. It participates in quinol/quinone metabolism; 1,4-dihydroxy-2-naphthoate biosynthesis; 1,4-dihydroxy-2-naphthoate from chorismate: step 2/7. The protein operates within cofactor biosynthesis; phylloquinone biosynthesis. In terms of biological role, catalyzes the thiamine diphosphate-dependent decarboxylation of 2-oxoglutarate and the subsequent addition of the resulting succinic semialdehyde-thiamine pyrophosphate anion to isochorismate to yield 2-succinyl-5-enolpyruvyl-6-hydroxy-3-cyclohexene-1-carboxylate (SEPHCHC). In Prochlorococcus marinus (strain SARG / CCMP1375 / SS120), this protein is 2-succinyl-5-enolpyruvyl-6-hydroxy-3-cyclohexene-1-carboxylate synthase.